Consider the following 190-residue polypeptide: Outer-membrane lipoprotein LolB (190 aa).

Residues 1–16 form the signal peptide; it reads MRLRFSLLLTVSLLAG. Cys17 carries the N-palmitoyl cysteine lipid modification. Cys17 carries the S-diacylglycerol cysteine lipid modification.

The protein belongs to the LolB family. In terms of assembly, monomer.

Its subcellular location is the cell outer membrane. Plays a critical role in the incorporation of lipoproteins in the outer membrane after they are released by the LolA protein. The chain is Outer-membrane lipoprotein LolB from Dechloromonas aromatica (strain RCB).